Consider the following 180-residue polypeptide: UPF0227 protein Ent638_1623 (180 aa).

This sequence belongs to the UPF0227 family.

The protein is UPF0227 protein Ent638_1623 of Enterobacter sp. (strain 638).